A 396-amino-acid chain; its full sequence is 1-deoxy-D-xylulose 5-phosphate reductoisomerase (396 aa).

Positions 10, 11, 12, 13, 38, and 123 each coordinate NADPH. Lysine 124 lines the 1-deoxy-D-xylulose 5-phosphate pocket. Glutamate 125 contacts NADPH. Aspartate 149 contributes to the Mn(2+) binding site. Serine 150, glutamate 151, serine 185, and histidine 208 together coordinate 1-deoxy-D-xylulose 5-phosphate. Mn(2+) is bound at residue glutamate 151. Glycine 214 provides a ligand contact to NADPH. Residues serine 221, asparagine 226, lysine 227, and glutamate 230 each contribute to the 1-deoxy-D-xylulose 5-phosphate site. Glutamate 230 is a binding site for Mn(2+).

Belongs to the DXR family. Mg(2+) is required as a cofactor. Mn(2+) serves as cofactor.

It catalyses the reaction 2-C-methyl-D-erythritol 4-phosphate + NADP(+) = 1-deoxy-D-xylulose 5-phosphate + NADPH + H(+). Its pathway is isoprenoid biosynthesis; isopentenyl diphosphate biosynthesis via DXP pathway; isopentenyl diphosphate from 1-deoxy-D-xylulose 5-phosphate: step 1/6. In terms of biological role, catalyzes the NADPH-dependent rearrangement and reduction of 1-deoxy-D-xylulose-5-phosphate (DXP) to 2-C-methyl-D-erythritol 4-phosphate (MEP). The protein is 1-deoxy-D-xylulose 5-phosphate reductoisomerase of Shewanella pealeana (strain ATCC 700345 / ANG-SQ1).